Consider the following 187-residue polypeptide: UPF0398 protein SAB1311c (187 aa).

This sequence belongs to the UPF0398 family.

The chain is UPF0398 protein SAB1311c from Staphylococcus aureus (strain bovine RF122 / ET3-1).